A 1406-amino-acid chain; its full sequence is Ubiquitin carboxyl-terminal hydrolase 6 (1406 aa).

The region spanning G100 to G292 is the Rab-GAP TBC domain. The disordered stretch occupies residues K348–T380. The USP domain maps to T532–Q1369. C541 serves as the catalytic Nucleophile. The disordered stretch occupies residues H1120–N1231. The segment covering E1129–L1155 has biased composition (basic and acidic residues). The segment covering L1156–P1197 has biased composition (low complexity). The Proton acceptor role is filled by H1328. The interval K1384–Q1406 is disordered.

This sequence belongs to the peptidase C19 family. In terms of assembly, interacts with RAC1 and CDC42. Interacts (via Rab-GAP TBC domain) with ARF6. Interacts with calmodulin (CALM1, CALM2 and/or CALM3); the interaction is calcium-dependent. In terms of processing, monubiquitinated; ubiquitination is calmodulin and calcium dependent. In terms of tissue distribution, testis specific. Expressed in various cancer cell lines.

The protein resides in the cell membrane. It localises to the cytoplasm. It is found in the endosome. The catalysed reaction is Thiol-dependent hydrolysis of ester, thioester, amide, peptide and isopeptide bonds formed by the C-terminal Gly of ubiquitin (a 76-residue protein attached to proteins as an intracellular targeting signal).. Deubiquitinase with an ATP-independent isopeptidase activity, cleaving at the C-terminus of the ubiquitin moiety. Catalyzes its own deubiquitination. In vitro, isoform 2, but not isoform 3, shows deubiquitinating activity. Promotes plasma membrane localization of ARF6 and selectively regulates ARF6-dependent endocytic protein trafficking. Is able to initiate tumorigenesis by inducing the production of matrix metalloproteinases following NF-kappa-B activation. May act as a GTPase-activating protein for RAB3A. The protein is Ubiquitin carboxyl-terminal hydrolase 6 (USP6) of Homo sapiens (Human).